We begin with the raw amino-acid sequence, 343 residues long: Methionine import ATP-binding protein MetN 2 (343 aa).

The ABC transporter domain occupies 2–241 (IEFKDVTKTF…PQQAVTKRFV (240 aa)). An ATP-binding site is contributed by 38 to 45 (GYSGAGKS).

This sequence belongs to the ABC transporter superfamily. Methionine importer (TC 3.A.1.24) family. As to quaternary structure, the complex is composed of two ATP-binding proteins (MetN), two transmembrane proteins (MetI) and a solute-binding protein (MetQ).

It is found in the cell membrane. It carries out the reaction L-methionine(out) + ATP + H2O = L-methionine(in) + ADP + phosphate + H(+). It catalyses the reaction D-methionine(out) + ATP + H2O = D-methionine(in) + ADP + phosphate + H(+). In terms of biological role, part of the ABC transporter complex MetNIQ involved in methionine import. Responsible for energy coupling to the transport system. The protein is Methionine import ATP-binding protein MetN 2 of Lactiplantibacillus plantarum (strain ATCC BAA-793 / NCIMB 8826 / WCFS1) (Lactobacillus plantarum).